A 59-amino-acid chain; its full sequence is Large ribosomal subunit protein bL33 (59 aa).

This sequence belongs to the bacterial ribosomal protein bL33 family.

In Borrelia turicatae (strain 91E135), this protein is Large ribosomal subunit protein bL33.